We begin with the raw amino-acid sequence, 155 residues long: Molybdopterin synthase catalytic subunit (155 aa).

Substrate-binding positions include 109–110 (HR), Lys125, and 132–134 (KKE).

The protein belongs to the MoaE family. MOCS2B subfamily. As to quaternary structure, heterotetramer; composed of 2 small (MOCS2A) and 2 large (MOCS2B) subunits.

It localises to the cytoplasm. The protein localises to the cytosol. The enzyme catalyses 2 [molybdopterin-synthase sulfur-carrier protein]-C-terminal-Gly-aminoethanethioate + cyclic pyranopterin phosphate + H2O = molybdopterin + 2 [molybdopterin-synthase sulfur-carrier protein]-C-terminal Gly-Gly + 2 H(+). Its pathway is cofactor biosynthesis; molybdopterin biosynthesis. Its function is as follows. Catalytic subunit of the molybdopterin synthase complex, a complex that catalyzes the conversion of precursor Z into molybdopterin. Acts by mediating the incorporation of 2 sulfur atoms from thiocarboxylated MOCS2A into precursor Z to generate a dithiolene group. This is Molybdopterin synthase catalytic subunit from Taeniopygia guttata (Zebra finch).